The following is a 372-amino-acid chain: AA9 family lytic polysaccharide monooxygenase C (372 aa).

Residues 1–16 (MFRSALFLLLAPLALS) form the signal peptide. 2 residues coordinate Cu(2+): histidine 17 and histidine 99. Cysteine 59 and cysteine 189 are disulfide-bonded. O2 contacts are provided by histidine 174 and glutamine 184. Tyrosine 186 provides a ligand contact to Cu(2+).

The protein belongs to the polysaccharide monooxygenase AA9 family. It depends on Cu(2+) as a cofactor.

Its subcellular location is the secreted. The enzyme catalyses [(1-&gt;4)-beta-D-glucosyl]n+m + reduced acceptor + O2 = 4-dehydro-beta-D-glucosyl-[(1-&gt;4)-beta-D-glucosyl]n-1 + [(1-&gt;4)-beta-D-glucosyl]m + acceptor + H2O.. In terms of biological role, lytic polysaccharide monooxygenase (LPMO) that depolymerizes crystalline and amorphous polysaccharides via the oxidation of scissile alpha- or beta-(1-4)-glycosidic bonds, yielding C1 or C4 oxidation products. Catalysis by LPMOs requires the reduction of the active-site copper from Cu(II) to Cu(I) by a reducing agent and H(2)O(2) or O(2) as a cosubstrate. The sequence is that of AA9 family lytic polysaccharide monooxygenase C from Aspergillus tamarii.